The primary structure comprises 484 residues: Monocarboxylate transporter 2 (484 aa).

Over 1 to 16 (MPSEPSAPLPQPLPPD) the chain is Cytoplasmic. The chain crosses the membrane as a helical span at residues 17–37 (GGWGWVVVCASFISIGFSYAF). Residues 38-60 (PKAVTVFFKDIQEIFNTTSSQIA) are Extracellular-facing. A helical transmembrane segment spans residues 61-81 (WISSIMLAVMYAGGPISSVLV). The Cytoplasmic portion of the chain corresponds to 82–90 (NNYGSRPVV). A helical membrane pass occupies residues 91–111 (IVGGLLCCIGMILASYSNSVI). Topologically, residues 112-116 (ELYLT) are extracellular. A helical transmembrane segment spans residues 117-137 (VGFIGGLGLAFNLQPALTIIG). The Cytoplasmic segment spans residues 138–149 (KYFYRRRPLANG). A helical membrane pass occupies residues 150 to 170 (CAMAGSPVFLSTLAPFNQYLF). Topologically, residues 171 to 174 (NNYG) are extracellular. A helical membrane pass occupies residues 175 to 195 (WKGSFLILGGIFLHSCVAGCL). The Cytoplasmic segment spans residues 196–245 (MRPVGPSPNTKKSKSKVGSRHDSTLKKASKVSTAQKVNRFLDFSLFMHRG). The helical transmembrane segment at 246–266 (FLIYLSGNVILFLGIFAPIIF) threads the bilayer. Residues 267–281 (LAQYAKHIGVDDYNS) lie on the Extracellular side of the membrane. Residues 282-302 (AFLLSVMAFIDMFARPSVGLI) traverse the membrane as a helical segment. Residues 303–311 (ANTSLIRPR) are Cytoplasmic-facing. The helical transmembrane segment at 312 to 332 (IQYLFSSAIIFTGICHLLCPL) threads the bilayer. The Extracellular segment spans residues 333–337 (ATTYS). Residues 338–358 (ALVVYVVFFGLGFGSISSLLF) form a helical membrane-spanning segment. At 359-372 (ECLMDIVGATRFSS) the chain is on the cytoplasmic side. The helical transmembrane segment at 373–393 (AVGLTTIVECCPVLFGPPLAG) threads the bilayer. Residues 394-405 (KLLDITGEYKYL) are Extracellular-facing. The chain crosses the membrane as a helical span at residues 406–426 (YIASGTVVLVSGTYLLIGNAI). The Cytoplasmic portion of the chain corresponds to 427 to 484 (NYRLLDKERKREKAKKKKSASHASREMEALNRSKQDEVTVKASNAHNPPSDRDKESNI). Positions 438-484 (EKAKKKKSASHASREMEALNRSKQDEVTVKASNAHNPPSDRDKESNI) are disordered. Basic and acidic residues-rich tracts occupy residues 449-465 (ASREMEALNRSKQDEVT) and 475-484 (PSDRDKESNI).

This sequence belongs to the major facilitator superfamily. Monocarboxylate porter (TC 2.A.1.13) family. As to quaternary structure, homodimer. Interacts with GRID2IP. Interacts with EMB; interaction mediates SLC16A7 targeting to the plasma membrane. Interacts with isoform 2 of BSG. As to expression, detected in testis and in spermatozoa (at protein level).

The protein localises to the cell membrane. It is found in the cytoplasm. The protein resides in the basolateral cell membrane. It catalyses the reaction (S)-lactate(in) + H(+)(in) = (S)-lactate(out) + H(+)(out). The catalysed reaction is 3-methyl-2-oxobutanoate(out) + H(+)(out) = 3-methyl-2-oxobutanoate(in) + H(+)(in). It carries out the reaction acetoacetate(out) + H(+)(out) = acetoacetate(in) + H(+)(in). The enzyme catalyses (R)-3-hydroxybutanoate(out) + H(+)(out) = (R)-3-hydroxybutanoate(in) + H(+)(in). It catalyses the reaction 4-methyl-2-oxopentanoate(out) + H(+)(out) = 4-methyl-2-oxopentanoate(in) + H(+)(in). The catalysed reaction is pyruvate(out) + H(+)(out) = pyruvate(in) + H(+)(in). It carries out the reaction (S)-3-hydroxybutanoate(out) + H(+)(out) = (S)-3-hydroxybutanoate(in) + H(+)(in). Its activity is regulated as follows. Transport activity exhibits steep dependence on substrate concentration. Substrate concentration sensitivity of SLC16A7 arises from the strong inter-subunit cooperativity of the SLC16A7 dimer during transport. Inhibited by AR-C155858. Proton-coupled monocarboxylate symporter. Catalyzes the rapid transport across the plasma membrane of monocarboxylates such as L-lactate, pyruvate and ketone bodies, acetoacetate, beta-hydroxybutyrate and acetate. Dimerization is functionally required and both subunits work cooperatively in transporting substrate. In Mus musculus (Mouse), this protein is Monocarboxylate transporter 2 (Slc16a7).